The chain runs to 444 residues: Tryptophan 5-hydroxylase 1 (444 aa).

Positions 19–94 (TLIFSLKNEV…NVLSVTPPDN (76 aa)) constitute an ACT domain. The residue at position 58 (Ser58) is a Phosphoserine; by PKA. Residues Tyr235, Arg257, and Thr265 each coordinate L-tryptophan. The Fe cation site is built by His272, His277, and Glu317. L-tryptophan is bound by residues Ser336 and Ile366.

This sequence belongs to the biopterin-dependent aromatic amino acid hydroxylase family. In terms of assembly, homotetramer. Interacts with DNAJC12. Fe(2+) serves as cofactor. Post-translationally, ubiquitinated, leading to its degradation by the proteasome. Ubiquitinated is triggered by phosphorylation. Phosphorylated; triggering degradation by the proteasome.

The enzyme catalyses (6R)-L-erythro-5,6,7,8-tetrahydrobiopterin + L-tryptophan + O2 = 5-hydroxy-L-tryptophan + (4aS,6R)-4a-hydroxy-L-erythro-5,6,7,8-tetrahydrobiopterin. It functions in the pathway aromatic compound metabolism; serotonin biosynthesis; serotonin from L-tryptophan: step 1/2. Its function is as follows. Oxidizes L-tryptophan to 5-hydroxy-l-tryptophan in the rate-determining step of serotonin biosynthesis. This chain is Tryptophan 5-hydroxylase 1 (TPH1), found in Oryctolagus cuniculus (Rabbit).